The chain runs to 118 residues: Large ribosomal subunit protein bL20 (118 aa).

The protein belongs to the bacterial ribosomal protein bL20 family.

Functionally, binds directly to 23S ribosomal RNA and is necessary for the in vitro assembly process of the 50S ribosomal subunit. It is not involved in the protein synthesizing functions of that subunit. The sequence is that of Large ribosomal subunit protein bL20 from Thermotoga neapolitana (strain ATCC 49049 / DSM 4359 / NBRC 107923 / NS-E).